The primary structure comprises 201 residues: Recombination protein RecR (201 aa).

The segment at 60–75 (CSRCGNVDTVDPCIVC) adopts a C4-type zinc-finger fold. The 96-residue stretch at 83–178 (SVIIVVEDVS…KITRLAHGVP (96 aa)) folds into the Toprim domain.

It belongs to the RecR family.

May play a role in DNA repair. It seems to be involved in an RecBC-independent recombinational process of DNA repair. It may act with RecF and RecO. The protein is Recombination protein RecR of Rhizobium johnstonii (strain DSM 114642 / LMG 32736 / 3841) (Rhizobium leguminosarum bv. viciae).